A 231-amino-acid chain; its full sequence is Probable GTP-binding protein EngB (231 aa).

The 181-residue stretch at 51 to 231 (DLSEIAFAGR…RAQLAALASP (181 aa)) folds into the EngB-type G domain. Residues 59–66 (GRSNVGKS), 86–90 (GRTQE), 109–112 (DLPG), 176–179 (TKAD), and 210–212 (TSS) contribute to the GTP site. The Mg(2+) site is built by S66 and T88.

This sequence belongs to the TRAFAC class TrmE-Era-EngA-EngB-Septin-like GTPase superfamily. EngB GTPase family. It depends on Mg(2+) as a cofactor.

In terms of biological role, necessary for normal cell division and for the maintenance of normal septation. This is Probable GTP-binding protein EngB from Rhodospirillum rubrum (strain ATCC 11170 / ATH 1.1.1 / DSM 467 / LMG 4362 / NCIMB 8255 / S1).